The sequence spans 2534 residues: Highly reducing polyketide synthase easB (2534 aa).

The interval 1–49 (MSPASRSRVEIADSESDSERLSSSPWSILSDNDSNTSDERSTRAGPGSL) is disordered. Positions 49 to 470 (LEPIAVIGIG…GTNAHVIIDA (422 aa)) constitute a Ketosynthase family 3 (KS3) domain. Catalysis depends on for beta-ketoacyl synthase activity residues Cys-222, His-356, and His-396. The interval 587 to 885 (IFSGQGAQYA…LSGPVNQILK (299 aa)) is malonyl-CoA:ACP transacylase (MAT) domain. Residues 973–1111 (HELLGTLSAD…GLVQAEVDSV (139 aa)) are N-terminal hotdog fold. Residues 973-1273 (HELLGTLSAD…QGIRVTSLGG (301 aa)) form a dehydratase (DH) domain region. The PKS/mFAS DH domain occupies 973-1277 (HELLGTLSAD…VTSLGGDVAA (305 aa)). The active-site Proton acceptor; for dehydratase activity is the His-1005. Residues 1131 to 1277 (THGTIPQKFY…VTSLGGDVAA (147 aa)) form a C-terminal hotdog fold region. Catalysis depends on Asp-1193, which acts as the Proton donor; for dehydratase activity. Positions 1395 to 1625 (KTSALSLLTK…VFISTAPFPR (231 aa)) are methyltransferase (CMet) domain. The enoyl reductase (ER) domain stretch occupies residues 1834–2146 (GLLETIRWKD…AGKHTGKIVL (313 aa)). The Carrier domain occupies 2452–2529 (EAVHIVTNAI…QLAAIVAKES (78 aa)). Positions 2453 to 2526 (AVHIVTNAIL…SISQLAAIVA (74 aa)) are ketoreductase (KR) domain. O-(pantetheine 4'-phosphoryl)serine is present on Ser-2489.

It functions in the pathway antibiotic biosynthesis. Its function is as follows. Polyketide synthase; part of the gene cluster that mediates the biosynthesis of emericellamides, secondary metabolites acting as antibiotics. The biosynthesis of emericellamides initiates from the highly reducing polyketide synthase easB which catalyzes the formation of the linear polyketide chain. EasB produces several polyketides that can be further processed by the downstream enzymes. The polyketides are released from easB as linear polyketide carboxylic acids, which are converted to CoA thioesters by the acyl-CoA ligase easD. The substrates are then loaded onto the acyltransferase easC, which shuttles them to the first thiolation (T) domain of the nonribosomal peptide synthetase easA. EasA then performs condensation of the polyketides with one glycine, two alanine, one valine and one leucine residues. A last step of cyclization leads to the production of emericellamides. This is Highly reducing polyketide synthase easB from Emericella nidulans (strain FGSC A4 / ATCC 38163 / CBS 112.46 / NRRL 194 / M139) (Aspergillus nidulans).